We begin with the raw amino-acid sequence, 257 residues long: uncharacterized protein (257 aa).

Positions 1–26 (MKKAFILSAAAAVGLFTFGGVQQASA) are cleaved as a signal peptide. The tract at residues 80-135 (AKQSNVKVQDVQKTETAKPAQKTTEKAAADQNTASKAPATAEKTNTTTSAPSSVSA) is disordered. Residues 121-134 (EKTNTTTSAPSSVS) are compositionally biased toward polar residues. Residues 141-254 (VELTNAERQK…ESGSIWTQQF (114 aa)) enclose the SCP domain.

This is an uncharacterized protein from Bacillus subtilis (strain 168).